The primary structure comprises 319 residues: Ribonuclease Z (319 aa).

Zn(2+) is bound by residues histidine 62, histidine 64, aspartate 66, histidine 67, histidine 145, aspartate 215, and histidine 273. Aspartate 66 (proton acceptor) is an active-site residue.

Belongs to the RNase Z family. Homodimer. It depends on Zn(2+) as a cofactor.

It catalyses the reaction Endonucleolytic cleavage of RNA, removing extra 3' nucleotides from tRNA precursor, generating 3' termini of tRNAs. A 3'-hydroxy group is left at the tRNA terminus and a 5'-phosphoryl group is left at the trailer molecule.. Functionally, zinc phosphodiesterase, which displays some tRNA 3'-processing endonuclease activity. Probably involved in tRNA maturation, by removing a 3'-trailer from precursor tRNA. The polypeptide is Ribonuclease Z (Borrelia hermsii (strain HS1 / DAH)).